The sequence spans 154 residues: Myoglobin (154 aa).

In terms of domain architecture, Globin spans 2–148 (GLSDGEWQSV…FRNDIAAKYK (147 aa)). Ser-4 carries the post-translational modification Phosphoserine. His-65 contacts nitrite. His-65 is an O2 binding site. Thr-68 bears the Phosphothreonine mark. His-94 is a heme b binding site.

Belongs to the globin family. Monomeric.

The protein resides in the cytoplasm. It localises to the sarcoplasm. It carries out the reaction Fe(III)-heme b-[protein] + nitric oxide + H2O = Fe(II)-heme b-[protein] + nitrite + 2 H(+). The enzyme catalyses H2O2 + AH2 = A + 2 H2O. Its function is as follows. Monomeric heme protein which primary function is to store oxygen and facilitate its diffusion within muscle tissues. Reversibly binds oxygen through a pentacoordinated heme iron and enables its timely and efficient release as needed during periods of heightened demand. Depending on the oxidative conditions of tissues and cells, and in addition to its ability to bind oxygen, it also has a nitrite reductase activity whereby it regulates the production of bioactive nitric oxide. Under stress conditions, like hypoxia and anoxia, it also protects cells against reactive oxygen species thanks to its pseudoperoxidase activity. The protein is Myoglobin (MB) of Nycticebus coucang (Slow loris).